A 729-amino-acid polypeptide reads, in one-letter code: Probable cyclic di-GMP phosphodiesterase PdeA (729 aa).

Helical transmembrane passes span 17-37 (AFTL…LAII), 41-61 (YIFL…IFGW), 83-103 (FLQT…ACAI), 126-146 (FWLG…VGSF), 163-183 (IFTV…NMLF), 214-234 (AFTL…CTPY), 238-258 (FIAG…VGKL), and 289-309 (YSLA…LYMV). The 129-residue stretch at 348 to 476 (AGKSFCCLRI…AHHHVLALDS (129 aa)) folds into the GGDEF domain. An EAL domain is found at 488 to 729 (QVLLLNTIRT…LIGRPQPLAD (242 aa)).

Its subcellular location is the cell membrane. The enzyme catalyses 3',3'-c-di-GMP + H2O = 5'-phosphoguanylyl(3'-&gt;5')guanosine + H(+). In terms of biological role, phosphodiesterase (PDE) that catalyzes the hydrolysis of cyclic-di-GMP (c-di-GMP) to 5'-pGpG. The polypeptide is Probable cyclic di-GMP phosphodiesterase PdeA (Escherichia coli (strain K12)).